The chain runs to 91 residues: Acylphosphatase (91 aa).

The region spanning 5-91 (RAHVFVSGRV…EGVDGFEVRW (87 aa)) is the Acylphosphatase-like domain. Catalysis depends on residues Arg20 and Asn38.

It belongs to the acylphosphatase family.

The catalysed reaction is an acyl phosphate + H2O = a carboxylate + phosphate + H(+). In Haloarcula marismortui (strain ATCC 43049 / DSM 3752 / JCM 8966 / VKM B-1809) (Halobacterium marismortui), this protein is Acylphosphatase (acyP).